Reading from the N-terminus, the 49-residue chain is Protein YdfW (49 aa).

The segment at 16-49 (PKADHPWLTRRTQSHQQVKPPKLPKKKPDPDKKD) is disordered.

May be involved in H(2) production during fermentative growth. The sequence is that of Protein YdfW (ydfW) from Escherichia coli (strain K12).